A 99-amino-acid polypeptide reads, in one-letter code: C-C motif chemokine 8 (99 aa).

A signal peptide spans 1–23; it reads MKVSAGILCLLLVAATFGTQVLA. Residue glutamine 24 is modified to Pyrrolidone carboxylic acid. Disulfide bonds link cysteine 34–cysteine 59 and cysteine 35–cysteine 75.

Belongs to the intercrine beta (chemokine CC) family. In terms of assembly, monomer or homodimer; in equilibrium.

It localises to the secreted. Its function is as follows. Chemotactic factor that attracts monocytes. This protein can bind heparin. This Bos taurus (Bovine) protein is C-C motif chemokine 8 (CCL8).